Here is a 99-residue protein sequence, read N- to C-terminus: Large ribosomal subunit protein uL23 (99 aa).

It belongs to the universal ribosomal protein uL23 family. Part of the 50S ribosomal subunit. Contacts protein L29, and trigger factor when it is bound to the ribosome.

Its function is as follows. One of the early assembly proteins it binds 23S rRNA. One of the proteins that surrounds the polypeptide exit tunnel on the outside of the ribosome. Forms the main docking site for trigger factor binding to the ribosome. The protein is Large ribosomal subunit protein uL23 of Rhodopseudomonas palustris (strain HaA2).